A 350-amino-acid chain; its full sequence is tRNA uridine(34) hydroxylase (350 aa).

The 95-residue stretch at 146–240 (DDPDAVFIDM…YARRAREQGL (95 aa)) folds into the Rhodanese domain. The active-site Cysteine persulfide intermediate is Cys200. Residues 319–328 (RRRRAGRENG) are compositionally biased toward basic and acidic residues. Residues 319–350 (RRRRAGRENGNKIFNKSRGRLNSKLSIPDPAE) are disordered.

Belongs to the TrhO family.

The enzyme catalyses uridine(34) in tRNA + AH2 + O2 = 5-hydroxyuridine(34) in tRNA + A + H2O. Catalyzes oxygen-dependent 5-hydroxyuridine (ho5U) modification at position 34 in tRNAs. The sequence is that of tRNA uridine(34) hydroxylase from Salmonella typhi.